The primary structure comprises 216 residues: Probable calcium-binding protein CML35 (216 aa).

Positions 18 to 58 are disordered; sequence TKSKASVSRSEPSSFSSNASSSSSDGSYGNLKQGPTATPIS. Residues 23–44 show a composition bias toward low complexity; the sequence is SVSRSEPSSFSSNASSSSSDGS. EF-hand domains are found at residues 66–101, 103–138, 141–176, and 178–213; these read DFYTELVQAFKLIDRDDDGVVSRGDLAALISRLSHE, PSQEEVSLMLREVDGGDGGCISLEDLASRVAGTSGE, VETEELREVFEIFDVDRNGKISAEELHRVFGVIGDE, and CTLEECMRMIATVDGNGDGFVCFDDFCRMMVPAMND. 4 residues coordinate Ca(2+): aspartate 79, aspartate 81, aspartate 83, and aspartate 90. Aspartate 154, aspartate 156, asparagine 158, lysine 160, glutamate 165, aspartate 191, asparagine 193, aspartate 195, and aspartate 202 together coordinate Ca(2+).

Functionally, potential calcium sensor. In Arabidopsis thaliana (Mouse-ear cress), this protein is Probable calcium-binding protein CML35 (CML35).